Here is a 700-residue protein sequence, read N- to C-terminus: AP-1-like transcription factor yap1 (700 aa).

Disordered regions lie at residues 17–185 and 228–296; these read SPGH…KDLE and MPVN…VSLR. The short motif at 34–41 is the Bipartite nuclear localization signal element; it reads MPVPGRDT. Residues 47 to 59 show a composition bias toward polar residues; that stretch reads PSVSNGSQPSAHQ. The Bipartite nuclear localization signal motif lies at 67-74; the sequence is SPTPEMPP. The segment covering 103–112 has biased composition (acidic residues); that stretch reads LDDDDDDASD. Residues 127–138 show a composition bias toward low complexity; that stretch reads AGRAAAASASGS. The span at 150 to 185 shows a compositional bias: basic and acidic residues; it reads GDGKRELSKSERRKEQNRAAQKAFRERREAKVKDLE. The 64-residue stretch at 156 to 219 folds into the bZIP domain; the sequence is LSKSERRKEQ…KRLQEENVAL (64 aa). A basic motif region spans residues 158–182; that stretch reads KSERRKEQNRAAQKAFRERREAKVK. The interval 184-191 is leucine-zipper; it reads LEDKVAEL. Transcription activation stretches follow at residues 213–400 and 452–577; these read QEEN…QPDS and LGAT…GRGN. Residues 231–244 are compositionally biased toward low complexity; it reads NSRNSPNSNNGSFS. Residues 280 to 296 show a composition bias toward polar residues; that stretch reads SANTISDNSSESLVSLR. The tract at residues 306 to 318 is n-CRD; the sequence is FSDHFNTYALGVV. 2 disordered regions span residues 320-359 and 542-609; these read VPPP…PSAD and NYLN…KATT. Low complexity-rich tracts occupy residues 335-358 and 542-573; these read SASN…PPSA and NYLN…NVSS. A compositionally biased stretch (polar residues) spans 589–607; it reads MGSSRTSVSHDSTDLQGKA. Residues 642–675 form a c-CRD region; the sequence is PSELWMRFGMQHENSTEHLLIDDLCDQMRAKATC. A Nuclear export signal motif is present at residues 660-667; it reads LLIDDLCD. A disulfide bridge connects residues Cys666 and Cys675.

The protein belongs to the bZIP family. YAP subfamily. Depending on the oxidative stress inducing agent, yap1 can undergo two distinct conformational changes, both involving disulfide bond formation, and both masking the nuclear export signal, thus abolishing nuclear export.

It is found in the nucleus. The protein resides in the cytoplasm. Its function is as follows. Transcription activator involved in oxidative stress response and redox homeostasis. Regulates the transcription of genes encoding antioxidant enzymes and components of the cellular thiol-reducing pathways. Involved in antifungal resistance to fluconazole. The polypeptide is AP-1-like transcription factor yap1 (Cryptococcus neoformans var. grubii serotype A (strain H99 / ATCC 208821 / CBS 10515 / FGSC 9487) (Filobasidiella neoformans var. grubii)).